Reading from the N-terminus, the 414-residue chain is Chaperone protein dnaJ 39 (414 aa).

Residues 1-24 (MATHSSRSENKDAGEEDELRRRNP) show a composition bias toward basic and acidic residues. The segment at 1–36 (MATHSSRSENKDAGEEDELRRRNPYEVLGIPSNSTD) is disordered. The region spanning 23-88 (NPYEVLGIPS…ENRRLYDTTG (66 aa)) is the J domain. A coiled-coil region spans residues 296–324 (EKESLRSTEAQIVSKRTELLKFEAEYHEV). The tract at residues 362 to 395 (TKQGSSKSRSWSKKKSSLLMEPREEGEVAVREEG) is disordered. Over residues 382–395 (EPREEGEVAVREEG) the composition is skewed to basic and acidic residues.

It belongs to the DnaJ family. C/III subfamily. In terms of tissue distribution, expressed constitutively at low levels in seedlings, roots, leaves, stems, flowers and siliques.

The protein resides in the membrane. In terms of biological role, plays a continuous role in plant development probably in the structural organization of compartments. Seems to be involved in early gravitropic signal transduction within the gravity-perceiving cells (statocytes). This is Chaperone protein dnaJ 39 (ATJ39) from Arabidopsis thaliana (Mouse-ear cress).